Consider the following 118-residue polypeptide: Fluoride-specific ion channel FluC 1 (118 aa).

The next 2 helical transmembrane spans lie at 1-21 and 29-49; these read MIQC…RGFV and FNTS…FCIG. Na(+) contacts are provided by glycine 71 and threonine 74. Residues 95-115 traverse the membrane as a helical segment; it reads LFILYSILQYGVSFVACLLGY.

It belongs to the fluoride channel Fluc/FEX (TC 1.A.43) family.

The protein resides in the cell membrane. It catalyses the reaction fluoride(in) = fluoride(out). With respect to regulation, na(+) is not transported, but it plays an essential structural role and its presence is essential for fluoride channel function. In terms of biological role, fluoride-specific ion channel. Important for reducing fluoride concentration in the cell, thus reducing its toxicity. This chain is Fluoride-specific ion channel FluC 1, found in Staphylococcus saprophyticus subsp. saprophyticus (strain ATCC 15305 / DSM 20229 / NCIMB 8711 / NCTC 7292 / S-41).